Reading from the N-terminus, the 322-residue chain is Transcription initiation factor IIB (322 aa).

2 repeat units span residues 125 to 213 (SLIN…VRDL) and 224 to 305 (NFVY…EIAQ).

Belongs to the TFIIB family.

Its function is as follows. Stabilizes TBP binding to an archaeal box-A promoter. Also responsible for recruiting RNA polymerase II to the pre-initiation complex (DNA-TBP-TFIIB). The polypeptide is Transcription initiation factor IIB (Aeropyrum pernix (strain ATCC 700893 / DSM 11879 / JCM 9820 / NBRC 100138 / K1)).